A 206-amino-acid chain; its full sequence is Putative 3-methyladenine DNA glycosylase (206 aa).

It belongs to the DNA glycosylase MPG family.

The protein is Putative 3-methyladenine DNA glycosylase of Rhodopseudomonas palustris (strain ATCC BAA-98 / CGA009).